The primary structure comprises 213 residues: MSAATSPSERRVSARIGAISESATLAVDAKAKALKAAGRPVIGFGAGEPDFPTPDYIVDAAVEACRNPKYHRYTPQRAPELKAAIAEKTLRDSGYEVDAGQILVTNGGKQAIYEAFAAILDPGDEVIVPAPYWTTYPESIRLAGGVPVEVVADETTGYRVSVEQLEAARTEKTKVVLFVSPSNPTGAVYSEADAEAIGRWAVEHGLWVMTDEI.

The L-aspartate site is built by G47, W133, and N183.

It belongs to the class-I pyridoxal-phosphate-dependent aminotransferase family. Homodimer. Pyridoxal 5'-phosphate serves as cofactor.

The protein localises to the cytoplasm. The catalysed reaction is L-aspartate + 2-oxoglutarate = oxaloacetate + L-glutamate. The sequence is that of Probable aspartate aminotransferase (aspC) from Streptomyces griseus.